The chain runs to 623 residues: UvrABC system protein C (623 aa).

The 78-residue stretch at 28 to 105 (GAPGVYRMLD…IKQLKPKYNV (78 aa)) folds into the GIY-YIG domain. A UVR domain is found at 215–250 (TRVQEELAEQMMAASEAMEFERAAALRDRIRALTTV).

It belongs to the UvrC family. As to quaternary structure, interacts with UvrB in an incision complex.

It is found in the cytoplasm. The UvrABC repair system catalyzes the recognition and processing of DNA lesions. UvrC both incises the 5' and 3' sides of the lesion. The N-terminal half is responsible for the 3' incision and the C-terminal half is responsible for the 5' incision. The polypeptide is UvrABC system protein C (Ruegeria pomeroyi (strain ATCC 700808 / DSM 15171 / DSS-3) (Silicibacter pomeroyi)).